The following is a 52-amino-acid chain: Large ribosomal subunit protein bL32c (52 aa).

Belongs to the bacterial ribosomal protein bL32 family.

The protein resides in the plastid. It is found in the chloroplast. This chain is Large ribosomal subunit protein bL32c, found in Lobularia maritima (Sweet alyssum).